Here is a 370-residue protein sequence, read N- to C-terminus: Prolactin-releasing peptide receptor (370 aa).

The disordered stretch occupies residues 1-34 (MTSLPPGTTGDPDLFSGPSPAGSTPANQSAEASE). The Extracellular segment spans residues 1–62 (MTSLPPGTTG…LQLVHQLKGL (62 aa)). Residues 21–34 (AGSTPANQSAEASE) are compositionally biased toward polar residues. Residues N27 and N36 are each glycosylated (N-linked (GlcNAc...) asparagine). A helical transmembrane segment spans residues 63–83 (IVMLYSIVVVVGLVGNCLLVL). Residues 84–101 (VIARVRRLHNVTNFLIGN) lie on the Cytoplasmic side of the membrane. A helical membrane pass occupies residues 102–122 (LALSDVLMCAACVPLTLAYAF). Topologically, residues 123–126 (EPRG) are extracellular. A helical membrane pass occupies residues 127 to 147 (WVFGGGLCHLVFFLQPVTVYV). C134 and C211 are oxidised to a cystine. Residues 148–175 (SVFTLTTIAVDRYVVLVHPLRRRISLKL) lie on the Cytoplasmic side of the membrane. The helical transmembrane segment at 176–196 (SAYAVLGIWALSAVLALPAAV) threads the bilayer. At 197–223 (HTYHVELKPHDVRLCEEFWGSQERQRQ) the chain is on the extracellular side. A helical transmembrane segment spans residues 224 to 244 (IYAWGLLLGTYLLPLLAILLS). Over 245–276 (YVRVSVKLRNRVVPGSVTQSQADWDRARRRRT) the chain is Cytoplasmic. The chain crosses the membrane as a helical span at residues 277 to 297 (FCLLVVVVVVFALCWLPLHIF). The Extracellular segment spans residues 298-317 (NLLRDLDPRAIDPYAFGLVQ). Residues 318–338 (LLCHWLAMSSACYNPFIYAWL) form a helical membrane-spanning segment. At 339–370 (HDSFREELRKMLLSWPRKIVPHGQNMTVSVVI) the chain is on the cytoplasmic side. The required for interaction with GRIP1, GRIP2 and PICK1 stretch occupies residues 365–370 (TVSVVI).

Belongs to the G-protein coupled receptor 1 family. In terms of assembly, interacts through its C-terminal region with the PDZ domain-containing proteins GRIP1, GRIP2 and PICK1. Interacts with PDZ domains 4 and 5 of GRIP1 and with the PDZ domain of PICK1. Widely expressed, with highest levels in pituitary, cerebellum, and hypothalamus.

It localises to the cell membrane. Its function is as follows. Receptor for prolactin-releasing peptide (PrRP). Implicated in lactation, regulation of food intake and pain-signal processing. The protein is Prolactin-releasing peptide receptor (Prlhr) of Rattus norvegicus (Rat).